Consider the following 581-residue polypeptide: Probable peptidoglycan D,D-transpeptidase PenA (581 aa).

A helical membrane pass occupies residues 28–48 (ISFVLMAIAVLFAGLIARGLY). Ser310 functions as the Acyl-ester intermediate in the catalytic mechanism.

It belongs to the transpeptidase family. FtsI subfamily.

The protein resides in the cell inner membrane. The enzyme catalyses Preferential cleavage: (Ac)2-L-Lys-D-Ala-|-D-Ala. Also transpeptidation of peptidyl-alanyl moieties that are N-acyl substituents of D-alanine.. It functions in the pathway cell wall biogenesis; peptidoglycan biosynthesis. Functionally, catalyzes cross-linking of the peptidoglycan cell wall at the division septum. This Neisseria meningitidis serogroup A / serotype 4A (strain DSM 15465 / Z2491) protein is Probable peptidoglycan D,D-transpeptidase PenA.